We begin with the raw amino-acid sequence, 510 residues long: NAD(P)H-quinone oxidoreductase subunit 2 B, chloroplastic (510 aa).

14 consecutive transmembrane segments (helical) span residues 24-44 (LLLFHGSFIFPECILIFGLIL), 59-79 (WFYFISSTSLVISITALLFRW), 99-119 (IFQFLILLCSTLCIPLSVEYI), 124-144 (MAITEFLLFVLTATLGGMFLC), 149-169 (LITIFVALECFSLCSYLLSGY), 184-204 (LLMGGASSSILVYGFSWLYGL), 229-249 (ISIALIFITVGLGFKLSLAPF), 261-281 (PTPVVAFLSVTSKVAALALAT), 295-315 (WHLLLEILAILSMILGNLLAI), 323-343 (MLAYSSIGQIGYVIIGIIVGD), 354-374 (YMLFYISMNLGTFACIVLFGL), 395-415 (ALSLALCLLSLGGLPPLAGFF), 418-438 (LYLFWCGWQAGLYFLVSIGLL), and 484-504 (MTVCVIASTILGISMNPILAI).

It belongs to the complex I subunit 2 family. As to quaternary structure, NDH is composed of at least 16 different subunits, 5 of which are encoded in the nucleus.

The protein resides in the plastid. It is found in the chloroplast thylakoid membrane. The enzyme catalyses a plastoquinone + NADH + (n+1) H(+)(in) = a plastoquinol + NAD(+) + n H(+)(out). It carries out the reaction a plastoquinone + NADPH + (n+1) H(+)(in) = a plastoquinol + NADP(+) + n H(+)(out). Its function is as follows. NDH shuttles electrons from NAD(P)H:plastoquinone, via FMN and iron-sulfur (Fe-S) centers, to quinones in the photosynthetic chain and possibly in a chloroplast respiratory chain. The immediate electron acceptor for the enzyme in this species is believed to be plastoquinone. Couples the redox reaction to proton translocation, and thus conserves the redox energy in a proton gradient. The sequence is that of NAD(P)H-quinone oxidoreductase subunit 2 B, chloroplastic from Zea mays (Maize).